Consider the following 380-residue polypeptide: Glucose-1-phosphate adenylyltransferase (380 aa).

Alpha-D-glucose 1-phosphate contacts are provided by residues Tyr-100, Gly-165, 180–181 (EK), and Ser-191.

This sequence belongs to the bacterial/plant glucose-1-phosphate adenylyltransferase family. Homotetramer.

It carries out the reaction alpha-D-glucose 1-phosphate + ATP + H(+) = ADP-alpha-D-glucose + diphosphate. Its pathway is glycan biosynthesis; glycogen biosynthesis. Involved in the biosynthesis of ADP-glucose, a building block required for the elongation reactions to produce glycogen. Catalyzes the reaction between ATP and alpha-D-glucose 1-phosphate (G1P) to produce pyrophosphate and ADP-Glc. In Clostridium acetobutylicum (strain ATCC 824 / DSM 792 / JCM 1419 / IAM 19013 / LMG 5710 / NBRC 13948 / NRRL B-527 / VKM B-1787 / 2291 / W), this protein is Glucose-1-phosphate adenylyltransferase.